The following is a 353-amino-acid chain: Histidine biosynthesis bifunctional protein HisB (353 aa).

The histidinol-phosphatase stretch occupies residues 1–164 (MKNKILFIDR…HITKYIIKHN (164 aa)). The active-site Nucleophile is the D9. Mg(2+)-binding residues include D9 and D11. D11 serves as the catalytic Proton donor. Zn(2+)-binding residues include C93, H95, C101, and C103. Residue D128 participates in Mg(2+) binding. Residues 165–353 (RYAEIIRRTK…NMLPTSKGIL (189 aa)) form an imidazoleglycerol-phosphate dehydratase region.

In the N-terminal section; belongs to the histidinol-phosphatase family. This sequence in the C-terminal section; belongs to the imidazoleglycerol-phosphate dehydratase family. Requires Mg(2+) as cofactor. It depends on Zn(2+) as a cofactor.

The protein resides in the cytoplasm. It catalyses the reaction D-erythro-1-(imidazol-4-yl)glycerol 3-phosphate = 3-(imidazol-4-yl)-2-oxopropyl phosphate + H2O. It carries out the reaction L-histidinol phosphate + H2O = L-histidinol + phosphate. The protein operates within amino-acid biosynthesis; L-histidine biosynthesis; L-histidine from 5-phospho-alpha-D-ribose 1-diphosphate: step 6/9. Its pathway is amino-acid biosynthesis; L-histidine biosynthesis; L-histidine from 5-phospho-alpha-D-ribose 1-diphosphate: step 8/9. The polypeptide is Histidine biosynthesis bifunctional protein HisB (Buchnera aphidicola subsp. Acyrthosiphon pisum (strain Tuc7)).